Consider the following 379-residue polypeptide: Forkhead box protein F1 (379 aa).

The tract at residues 1–45 (MSSAPEKQQPPHGGGGGGGGGGGAAMDPASSGPSKAKKTNAGIRR) is disordered. Positions 12 to 24 (HGGGGGGGGGGGA) are enriched in gly residues. Positions 47–138 (EKPPYSYIAL…EFMFEEGSFR (92 aa)) form a DNA-binding region, fork-head.

As to expression, expressed in lung and placenta.

The protein localises to the nucleus. Functionally, probable transcription activator for a number of lung-specific genes. This is Forkhead box protein F1 (FOXF1) from Homo sapiens (Human).